The chain runs to 159 residues: ATP synthase subunit b (159 aa).

A helical transmembrane segment spans residues E2–L22.

This sequence belongs to the ATPase B chain family. In terms of assembly, F-type ATPases have 2 components, F(1) - the catalytic core - and F(0) - the membrane proton channel. F(1) has five subunits: alpha(3), beta(3), gamma(1), delta(1), epsilon(1). F(0) has three main subunits: a(1), b(2) and c(10-14). The alpha and beta chains form an alternating ring which encloses part of the gamma chain. F(1) is attached to F(0) by a central stalk formed by the gamma and epsilon chains, while a peripheral stalk is formed by the delta and b chains.

It is found in the cell membrane. F(1)F(0) ATP synthase produces ATP from ADP in the presence of a proton or sodium gradient. F-type ATPases consist of two structural domains, F(1) containing the extramembraneous catalytic core and F(0) containing the membrane proton channel, linked together by a central stalk and a peripheral stalk. During catalysis, ATP synthesis in the catalytic domain of F(1) is coupled via a rotary mechanism of the central stalk subunits to proton translocation. In terms of biological role, component of the F(0) channel, it forms part of the peripheral stalk, linking F(1) to F(0). In Clostridium acetobutylicum (strain ATCC 824 / DSM 792 / JCM 1419 / IAM 19013 / LMG 5710 / NBRC 13948 / NRRL B-527 / VKM B-1787 / 2291 / W), this protein is ATP synthase subunit b.